The chain runs to 416 residues: D-amino acid dehydrogenase (416 aa).

3–17 lines the FAD pocket; it reads VVILGAGVIGVTSAW.

This sequence belongs to the DadA oxidoreductase family. FAD serves as cofactor.

It catalyses the reaction a D-alpha-amino acid + A + H2O = a 2-oxocarboxylate + AH2 + NH4(+). It participates in amino-acid degradation; D-alanine degradation; NH(3) and pyruvate from D-alanine: step 1/1. Its function is as follows. Oxidative deamination of D-amino acids. In Rhizorhabdus wittichii (strain DSM 6014 / CCUG 31198 / JCM 15750 / NBRC 105917 / EY 4224 / RW1) (Sphingomonas wittichii), this protein is D-amino acid dehydrogenase.